The sequence spans 418 residues: Protein-lysine N-trimethyltransferase SMYD5 (418 aa).

The 332-residue stretch at 21-352 (VSVEVRFVSS…PGEEICISYL (332 aa)) folds into the SET domain. The segment at 98 to 136 (PELCTVRKDLHQNCPHCQVMYCSAECRLAATEQYHQVLC) adopts an MYND-type zinc-finger fold. Tyrosine 351 provides a ligand contact to S-adenosyl-L-methionine. Residues 385-418 (ADEPNVTSEEEEEEEEEEEGEPEDAELGDEMTDV) are disordered.

Belongs to the class V-like SAM-binding methyltransferase superfamily. As to quaternary structure, interacts with the N-CoR complex. Interacts with EHMT2 and CBX5. Ubiquitinated and degradaed by the proteasome in response to mild hypothermia (32 degrees Celsius), relieving repression of the SP1 gene.

Its subcellular location is the cytoplasm. The catalysed reaction is L-lysyl-[protein] + 3 S-adenosyl-L-methionine = N(6),N(6),N(6)-trimethyl-L-lysyl-[protein] + 3 S-adenosyl-L-homocysteine + 3 H(+). The enzyme catalyses L-lysyl(20)-[histone H4] + 3 S-adenosyl-L-methionine = N(6),N(6),N(6)-trimethyl-L-lysyl(20)-[histone H4] + 3 S-adenosyl-L-homocysteine + 3 H(+). It catalyses the reaction L-lysyl(36)-[histone H3] + 3 S-adenosyl-L-methionine = N(6),N(6),N(6)-trimethyl-L-lysyl(36)-[histone H3] + 3 S-adenosyl-L-homocysteine + 3 H(+). Functionally, protein-lysine N-trimethyltransferase that specifically catalyzes trimethylation of 'Lys-22' of the RPL40/eL40 subunit of the 60S ribosome, thereby promoting translation elongation and protein synthesis. May also act as a histone methyltransferase in the context of histone octamers, but not on nucleosome substrates: trimethylates 'Lys-36' of histone H3 and 'Lys-20' of histone H4 to form H3K36me3 and H4K20me3, respectively. The histone methyltransferase activity, which is independent of its SET domain, is however unsure in vivo. In association with the NCoR corepressor complex, involved in the repression of toll-like receptor 4 (TLR4)-target inflammatory genes in macrophages, possibly by catalyzing the formation of H4K20me3 at the gene promoters. Plays an important role in embryonic stem (ES) cell self-renewal and differentiation. Maintains genome stability of ES cells during differentiation through regulation of heterochromatin formation and repression of endogenous repetitive DNA elements by promoting H4K20me3 marks. Acts as a regulator of the hypothermia response: its degradation in response to mild hypothermia relieves the formation of H3K36me3 at gene promoters, allowing expression of the neuroprotective gene SP1. The protein is Protein-lysine N-trimethyltransferase SMYD5 of Homo sapiens (Human).